The sequence spans 899 residues: Periodic tryptophan protein 2 homolog (899 aa).

13 WD repeats span residues 9–52, 53–92, 94–132, 149–188, 193–232, 252–291, 294–334, 337–376, 379–418, 422–464, 465–504, 507–546, and 569–608; these read NLLG…TLPF, SHRK…VLYH, SFKA…DANA, QHFD…GFTP, GHRQ…GQDE, QNSA…MIHT, ISQN…YILK, GHFD…CIVT, EHTS…NFRT, PERL…DRLS, GHEG…QTSE, QLNS…QQAG, and AGTK…LLKK. The tract at residues 639–668 is disordered; that stretch reads DEQGEASDFEDRIDRSLPGSKRGDPSARRK. The segment covering 647–668 has biased composition (basic and acidic residues); sequence FEDRIDRSLPGSKRGDPSARRK. The WD 14 repeat unit spans residues 669 to 709; sequence NPEVRVNGVAFSPNGSAFCAASTEGLLIYSLDTTIQFDPFD. Residues 866–899 form a disordered region; it reads TGSDEQPGAGGMSLNDVMQQDEGNASEDEWIGLV. The segment covering 889–899 has biased composition (acidic residues); that stretch reads NASEDEWIGLV.

It belongs to the WD repeat PWP2 family.

The chain is Periodic tryptophan protein 2 homolog from Neurospora crassa (strain ATCC 24698 / 74-OR23-1A / CBS 708.71 / DSM 1257 / FGSC 987).